Consider the following 502-residue polypeptide: Protein YdgA (502 aa).

An N-terminal signal peptide occupies residues 1–19 (MNKSLVAVGVIVALGVVWT).

It to E.coli YihF and H.influenzae HI_1236. As to quaternary structure, homodimer.

The protein resides in the cell inner membrane. The protein is Protein YdgA (ydgA) of Escherichia coli (strain K12).